A 171-amino-acid chain; its full sequence is Neuronal vesicle trafficking-associated protein 2 (171 aa).

The disordered stretch occupies residues 1–21; sequence MVKLNGNPGEKGAKPPSVEDG. The Cytoplasmic portion of the chain corresponds to 1–71; the sequence is MVKLNGNPGE…FRVPKIAEFT (71 aa). The helical; Signal-anchor for type II membrane protein transmembrane segment at 72-92 threads the bilayer; sequence VTILVSLALAFLACIVFLVVY. Residues 93-171 are Lumenal-facing; that stretch reads KAFTYDHSCP…EPKPPKTQGH (79 aa).

The protein belongs to the NSG family.

It is found in the membrane. It localises to the golgi apparatus. The protein localises to the trans-Golgi network membrane. Its subcellular location is the cell projection. The protein resides in the dendrite. It is found in the endosome membrane. It localises to the early endosome membrane. The protein localises to the late endosome membrane. Its subcellular location is the lysosome lumen. The protein resides in the cytoplasmic vesicle membrane. It is found in the golgi stack membrane. It localises to the endosome. The protein localises to the multivesicular body membrane. The chain is Neuronal vesicle trafficking-associated protein 2 from Rattus norvegicus (Rat).